A 59-amino-acid chain; its full sequence is Cecropin-A1 (59 aa).

The N-terminal stretch at 1 to 23 (MNFTKLFAIVLLAALVLLGQTEA) is a signal peptide.

This sequence belongs to the cecropin family.

The protein resides in the secreted. Functionally, cecropins have lytic and antibacterial activity against several Gram-positive and Gram-negative bacteria. This chain is Cecropin-A1 (CECA1), found in Aedes albopictus (Asian tiger mosquito).